The following is a 409-amino-acid chain: uncharacterized protein (409 aa).

One can recognise an OBG-type G domain in the interval 5-274 (ILIGFVGKPS…LAKQGFVKYE (270 aa)). Residues 11-18 (GKPSSGKS) and 83-87 (DVAGL) contribute to the GTP site.

Belongs to the TRAFAC class OBG-HflX-like GTPase superfamily. OBG GTPase family.

It is found in the cytoplasm. Its subcellular location is the nucleus. This is an uncharacterized protein from Schizosaccharomyces pombe (strain 972 / ATCC 24843) (Fission yeast).